A 393-amino-acid chain; its full sequence is MSLSLKRKDLMIVNMGPQHPSMHGVLRLIVTLDGEDVIDCEPILGYLHRGMEKIAENRSIIQYLPYVTRWDYLATMFTEAITVNAPEFLENIQIPQRASYIRVIMLELSRIASHLLWLGPFMADLGAQTPFFYIFRERELIYDLFEAATGMRMMHNYFRIGGVAADLPYGWMDKCLDFCDYFLQGVVEYQQLITQNPIFLERVEGVGFISGEEAVNWGLSGPMLRASGIQWDLRKIDPYESYNQFDWKVQWQKEGDSLARYLVRVGEMRESIKIIQQAVEKIPGGPYENLEARRFKKAKNPEWNDFEYRFLGKKPSPNFELSKQELYVRVEAPKGELGIYLVGDDSLFPWRWKIRPPGFINLQILPQLVKKMKLADIMTILGSIDIIMGEVDR.

This sequence belongs to the complex I 49 kDa subunit family. As to quaternary structure, NDH is composed of at least 16 different subunits, 5 of which are encoded in the nucleus.

Its subcellular location is the plastid. It localises to the chloroplast thylakoid membrane. It catalyses the reaction a plastoquinone + NADH + (n+1) H(+)(in) = a plastoquinol + NAD(+) + n H(+)(out). It carries out the reaction a plastoquinone + NADPH + (n+1) H(+)(in) = a plastoquinol + NADP(+) + n H(+)(out). NDH shuttles electrons from NAD(P)H:plastoquinone, via FMN and iron-sulfur (Fe-S) centers, to quinones in the photosynthetic chain and possibly in a chloroplast respiratory chain. The immediate electron acceptor for the enzyme in this species is believed to be plastoquinone. Couples the redox reaction to proton translocation, and thus conserves the redox energy in a proton gradient. The polypeptide is NAD(P)H-quinone oxidoreductase subunit H, chloroplastic (Saccharum hybrid (Sugarcane)).